The primary structure comprises 67 residues: DNA-directed RNA polymerase subunit omega (67 aa).

It belongs to the RNA polymerase subunit omega family. In terms of assembly, the RNAP catalytic core consists of 2 alpha, 1 beta, 1 beta' and 1 omega subunit. When a sigma factor is associated with the core the holoenzyme is formed, which can initiate transcription.

It carries out the reaction RNA(n) + a ribonucleoside 5'-triphosphate = RNA(n+1) + diphosphate. Functionally, promotes RNA polymerase assembly. Latches the N- and C-terminal regions of the beta' subunit thereby facilitating its interaction with the beta and alpha subunits. The chain is DNA-directed RNA polymerase subunit omega from Ralstonia nicotianae (strain ATCC BAA-1114 / GMI1000) (Ralstonia solanacearum).